The primary structure comprises 256 residues: Exosome complex component RRP41-like (256 aa).

Belongs to the RNase PH family. Probable component of the RNA exosome complex. In terms of tissue distribution, highly expressed in imbibed seeds and young seedlings.

The protein resides in the cytoplasm. Its subcellular location is the nucleus. Functionally, non-catalytic component of the RNA exosome complex which has 3'-&gt;5' exoribonuclease activity and participates in a multitude of cellular RNA processing, maturation and degradation events. In vitro, is a processive phosphorolytic exonuclease and requires a single-stranded poly(A) tail on the substrate RNA for its activity. Plays an important role in seed germination and early seedling growth by mediating specific cytoplasmic mRNA decay of transcripts coding for the abscisic acid (ABA) biosynthetic enzymes NCED5 and NCED6, and the ABA signaling transcription factors ABI3 and ABI4. The protein is Exosome complex component RRP41-like of Arabidopsis thaliana (Mouse-ear cress).